A 167-amino-acid polypeptide reads, in one-letter code: Insertion element IS1 1 protein InsB (167 aa).

The protein belongs to the transposase 27 family.

Absolutely required for transposition of IS1. The chain is Insertion element IS1 1 protein InsB (insB1) from Escherichia coli (strain K12).